We begin with the raw amino-acid sequence, 501 residues long: Ribose import ATP-binding protein RbsA (501 aa).

ABC transporter domains lie at 5-241 and 252-495; these read LQLK…VGRK and APGE…VGKL. 37 to 44 lines the ATP pocket; the sequence is GENGAGKS.

This sequence belongs to the ABC transporter superfamily. Ribose importer (TC 3.A.1.2.1) family. The complex is composed of an ATP-binding protein (RbsA), two transmembrane proteins (RbsC) and a solute-binding protein (RbsB).

Its subcellular location is the cell inner membrane. It carries out the reaction D-ribose(out) + ATP + H2O = D-ribose(in) + ADP + phosphate + H(+). In terms of biological role, part of the ABC transporter complex RbsABC involved in ribose import. Responsible for energy coupling to the transport system. The sequence is that of Ribose import ATP-binding protein RbsA from Salmonella paratyphi A (strain ATCC 9150 / SARB42).